The sequence spans 227 residues: Cytochrome c oxidase subunit 2 (227 aa).

Topologically, residues 1-14 are mitochondrial intermembrane; the sequence is MAHAAQVGLQDATS. The helical transmembrane segment at 15 to 45 threads the bilayer; the sequence is PIMEELITFHDHALMIIFLICFLVLYALFLT. Topologically, residues 46–59 are mitochondrial matrix; that stretch reads LTTKLTSTNISDAQ. A helical membrane pass occupies residues 60–87; the sequence is EMETIWTILPAIILVLIALPSLRILYMT. At 88 to 227 the chain is on the mitochondrial intermembrane side; that stretch reads DEINDPSFTI…IFEMGPVFAL (140 aa). Cu cation is bound by residues His-161, Cys-196, Glu-198, Cys-200, His-204, and Met-207. Glu-198 lines the Mg(2+) pocket.

The protein belongs to the cytochrome c oxidase subunit 2 family. As to quaternary structure, component of the cytochrome c oxidase (complex IV, CIV), a multisubunit enzyme composed of 14 subunits. The complex is composed of a catalytic core of 3 subunits MT-CO1, MT-CO2 and MT-CO3, encoded in the mitochondrial DNA, and 11 supernumerary subunits COX4I, COX5A, COX5B, COX6A, COX6B, COX6C, COX7A, COX7B, COX7C, COX8 and NDUFA4, which are encoded in the nuclear genome. The complex exists as a monomer or a dimer and forms supercomplexes (SCs) in the inner mitochondrial membrane with NADH-ubiquinone oxidoreductase (complex I, CI) and ubiquinol-cytochrome c oxidoreductase (cytochrome b-c1 complex, complex III, CIII), resulting in different assemblies (supercomplex SCI(1)III(2)IV(1) and megacomplex MCI(2)III(2)IV(2)). Found in a complex with TMEM177, COA6, COX18, COX20, SCO1 and SCO2. Interacts with TMEM177 in a COX20-dependent manner. Interacts with COX20. Interacts with COX16. Requires Cu cation as cofactor.

Its subcellular location is the mitochondrion inner membrane. It catalyses the reaction 4 Fe(II)-[cytochrome c] + O2 + 8 H(+)(in) = 4 Fe(III)-[cytochrome c] + 2 H2O + 4 H(+)(out). Its function is as follows. Component of the cytochrome c oxidase, the last enzyme in the mitochondrial electron transport chain which drives oxidative phosphorylation. The respiratory chain contains 3 multisubunit complexes succinate dehydrogenase (complex II, CII), ubiquinol-cytochrome c oxidoreductase (cytochrome b-c1 complex, complex III, CIII) and cytochrome c oxidase (complex IV, CIV), that cooperate to transfer electrons derived from NADH and succinate to molecular oxygen, creating an electrochemical gradient over the inner membrane that drives transmembrane transport and the ATP synthase. Cytochrome c oxidase is the component of the respiratory chain that catalyzes the reduction of oxygen to water. Electrons originating from reduced cytochrome c in the intermembrane space (IMS) are transferred via the dinuclear copper A center (CU(A)) of subunit 2 and heme A of subunit 1 to the active site in subunit 1, a binuclear center (BNC) formed by heme A3 and copper B (CU(B)). The BNC reduces molecular oxygen to 2 water molecules using 4 electrons from cytochrome c in the IMS and 4 protons from the mitochondrial matrix. The sequence is that of Cytochrome c oxidase subunit 2 (MT-CO2) from Gorilla gorilla gorilla (Western lowland gorilla).